Consider the following 89-residue polypeptide: Putative membrane protein insertion efficiency factor (89 aa).

The tract at residues 68–89 is disordered; it reads VPPPNSDARNAPHEAEASSHRL. Residues 77–89 are compositionally biased toward basic and acidic residues; the sequence is NAPHEAEASSHRL.

Belongs to the UPF0161 family.

It is found in the cell inner membrane. Its function is as follows. Could be involved in insertion of integral membrane proteins into the membrane. This is Putative membrane protein insertion efficiency factor from Burkholderia thailandensis (strain ATCC 700388 / DSM 13276 / CCUG 48851 / CIP 106301 / E264).